The following is a 304-amino-acid chain: HTH-type transcriptional regulator TtuA (304 aa).

The HTH lysR-type domain occupies 1–58 (MELEQLKCFVAAAEELHFGRAAQKMGILPASLGRHLRLLEESLGTRLMSRTTRSVALT). The H-T-H motif DNA-binding region spans 18–37 (FGRAAQKMGILPASLGRHLR).

The protein belongs to the LysR transcriptional regulatory family.

Its function is as follows. Transcriptional regulator of the ttuABCDE tartrate utilization operon. The chain is HTH-type transcriptional regulator TtuA (ttuA) from Agrobacterium vitis (Rhizobium vitis).